Reading from the N-terminus, the 133-residue chain is Small ribosomal subunit protein uS11 (133 aa).

Belongs to the universal ribosomal protein uS11 family. As to quaternary structure, part of the 30S ribosomal subunit.

Its function is as follows. Located on the platform of the 30S subunit. The polypeptide is Small ribosomal subunit protein uS11 (Pyrobaculum aerophilum (strain ATCC 51768 / DSM 7523 / JCM 9630 / CIP 104966 / NBRC 100827 / IM2)).